The chain runs to 328 residues: 2,4-dinitroanisole O-demethylase subunit alpha (328 aa).

Residues 1-9 (MSVTSQTSS) constitute a propeptide that is removed on maturation. Residues H101, H103, D105, H168, H225, and C247 each contribute to the Zn(2+) site.

It belongs to the metallo-beta-lactamase superfamily. As to quaternary structure, part of the complex DnhAB composed of the 2,4-dinitroanisole O-demethylase alpha (DnhA) and beta (DnhB) subunits. Zn(2+) is required as a cofactor.

The enzyme catalyses 2,4-dinitroanisole + H2O = 2,4-dinitrophenol + methanol + H(+). In terms of biological role, involved in the degradation of 2,4-dinitroanisole (DNAN), an insensitive munition ingredient used in explosive formulations as a replacement for 2,4,6-trinitrotoluene (TNT). Catalyzes the removal of the methyl group from 2,4-dinitroanisole (DNAN) to yield 2,4-dinitrophenol (2,4-DNP) and methanol. This chain is 2,4-dinitroanisole O-demethylase subunit alpha, found in Nocardioides sp. (strain JS1661).